A 108-amino-acid chain; its full sequence is MSAVNSKTKFDEGRLMQVLVAPIVSEKATMIADKTNAVTFKVLQDATKFEIKAAVQLMFKVDVQSVAVLNIKGKTKRFGKSVGRRDNIRKAYVTLKPGQELNLGGESA.

The protein belongs to the universal ribosomal protein uL23 family. Part of the 50S ribosomal subunit. Contacts protein L29, and trigger factor when it is bound to the ribosome.

Functionally, one of the early assembly proteins it binds 23S rRNA. One of the proteins that surrounds the polypeptide exit tunnel on the outside of the ribosome. Forms the main docking site for trigger factor binding to the ribosome. The polypeptide is Large ribosomal subunit protein uL23 (Polaromonas sp. (strain JS666 / ATCC BAA-500)).